The following is a 216-amino-acid chain: Deoxyribose-phosphate aldolase (216 aa).

Residue Asp89 is the Proton donor/acceptor of the active site. The active-site Schiff-base intermediate with acetaldehyde is Lys153. Catalysis depends on Lys182, which acts as the Proton donor/acceptor.

It belongs to the DeoC/FbaB aldolase family. DeoC type 1 subfamily.

It is found in the cytoplasm. It catalyses the reaction 2-deoxy-D-ribose 5-phosphate = D-glyceraldehyde 3-phosphate + acetaldehyde. It functions in the pathway carbohydrate degradation; 2-deoxy-D-ribose 1-phosphate degradation; D-glyceraldehyde 3-phosphate and acetaldehyde from 2-deoxy-alpha-D-ribose 1-phosphate: step 2/2. In terms of biological role, catalyzes a reversible aldol reaction between acetaldehyde and D-glyceraldehyde 3-phosphate to generate 2-deoxy-D-ribose 5-phosphate. This chain is Deoxyribose-phosphate aldolase, found in Treponema denticola (strain ATCC 35405 / DSM 14222 / CIP 103919 / JCM 8153 / KCTC 15104).